The following is a 169-amino-acid chain: MAHRAASDAELIAWVDEQDRPLGSLPRAELRERGLIGRGTFILLFNSAGELCVQRRTLSKAVYPGYWDLAAGGMVQAGEPYADSAARELEEELGIRDAVLREHGRFFFDEPGNRLWCAVFSAVSDAPLRLQAEEISEARFIRPELALEEARSLPYCPDSLQALRLYLDA.

Residues 35–163 enclose the Nudix hydrolase domain; sequence LIGRGTFILL…PYCPDSLQAL (129 aa). Residues 81 to 103 carry the Nudix box motif; sequence YADSAARELEEELGIRDAVLREH. Positions 88 and 92 each coordinate Mg(2+).

The protein belongs to the Nudix hydrolase family. Mg(2+) serves as cofactor.

This is an uncharacterized protein from Pseudomonas aeruginosa (strain ATCC 15692 / DSM 22644 / CIP 104116 / JCM 14847 / LMG 12228 / 1C / PRS 101 / PAO1).